The primary structure comprises 73 residues: MIEITCNDRLGKKVRVKCNPDDTIGDLKKLIAAQTGTKHEKIVLKKWYTIFKDPIRLSDYEIHDGMNLELYYQ.

One can recognise a Ubiquitin-like domain in the interval 1 to 73; it reads MIEITCNDRL…DGMNLELYYQ (73 aa).

It is found in the cytoplasm. This chain is Ubiquitin-like protein 5 (ubl), found in Drosophila melanogaster (Fruit fly).